The primary structure comprises 366 residues: Aminomethyltransferase (366 aa).

It belongs to the GcvT family. The glycine cleavage system is composed of four proteins: P, T, L and H.

It carries out the reaction N(6)-[(R)-S(8)-aminomethyldihydrolipoyl]-L-lysyl-[protein] + (6S)-5,6,7,8-tetrahydrofolate = N(6)-[(R)-dihydrolipoyl]-L-lysyl-[protein] + (6R)-5,10-methylene-5,6,7,8-tetrahydrofolate + NH4(+). Its function is as follows. The glycine cleavage system catalyzes the degradation of glycine. This Moorella thermoacetica (strain ATCC 39073 / JCM 9320) protein is Aminomethyltransferase.